The sequence spans 193 residues: Fe/S biogenesis protein NfuA (193 aa).

[4Fe-4S] cluster-binding residues include C149 and C152.

This sequence belongs to the NfuA family. Homodimer. [4Fe-4S] cluster serves as cofactor.

Its function is as follows. Involved in iron-sulfur cluster biogenesis. Binds a 4Fe-4S cluster, can transfer this cluster to apoproteins, and thereby intervenes in the maturation of Fe/S proteins. Could also act as a scaffold/chaperone for damaged Fe/S proteins. This Psychromonas ingrahamii (strain DSM 17664 / CCUG 51855 / 37) protein is Fe/S biogenesis protein NfuA.